The primary structure comprises 301 residues: Ribosomal RNA small subunit methyltransferase H (301 aa).

S-adenosyl-L-methionine contacts are provided by residues 35 to 37 (GGH), aspartate 55, phenylalanine 84, aspartate 105, and glutamine 112.

This sequence belongs to the methyltransferase superfamily. RsmH family.

It is found in the cytoplasm. The enzyme catalyses cytidine(1402) in 16S rRNA + S-adenosyl-L-methionine = N(4)-methylcytidine(1402) in 16S rRNA + S-adenosyl-L-homocysteine + H(+). Specifically methylates the N4 position of cytidine in position 1402 (C1402) of 16S rRNA. The sequence is that of Ribosomal RNA small subunit methyltransferase H from Chloroflexus aggregans (strain MD-66 / DSM 9485).